Here is a 247-residue protein sequence, read N- to C-terminus: 1-(5-phosphoribosyl)-5-[(5-phosphoribosylamino)methylideneamino] imidazole-4-carboxamide isomerase (247 aa).

D16 (proton acceptor) is an active-site residue. The active-site Proton donor is the D135.

This sequence belongs to the HisA/HisF family.

The protein resides in the cytoplasm. It carries out the reaction 1-(5-phospho-beta-D-ribosyl)-5-[(5-phospho-beta-D-ribosylamino)methylideneamino]imidazole-4-carboxamide = 5-[(5-phospho-1-deoxy-D-ribulos-1-ylimino)methylamino]-1-(5-phospho-beta-D-ribosyl)imidazole-4-carboxamide. It participates in amino-acid biosynthesis; L-histidine biosynthesis; L-histidine from 5-phospho-alpha-D-ribose 1-diphosphate: step 4/9. The chain is 1-(5-phosphoribosyl)-5-[(5-phosphoribosylamino)methylideneamino] imidazole-4-carboxamide isomerase from Paenarthrobacter aurescens (strain TC1).